The primary structure comprises 65 residues: Large ribosomal subunit protein bL35 (65 aa).

Positions 1-22 (MPKIKTLRSAAKRFKKTASGKF) are disordered. A compositionally biased stretch (basic residues) spans 10 to 22 (AAKRFKKTASGKF).

This sequence belongs to the bacterial ribosomal protein bL35 family.

This is Large ribosomal subunit protein bL35 from Buchnera aphidicola subsp. Schizaphis graminum (strain Sg).